The following is a 4555-amino-acid chain: Protocadherin Fat 3 (4555 aa).

The first 31 residues, 1–31 (MSVTMGHCMGTKPPSCIILLLLKLFATVSQG), serve as a signal peptide directing secretion. Over 32-4153 (LPGTGPLGFH…AGHSYVGKEE (4122 aa)) the chain is Extracellular. Cadherin domains follow at residues 43 to 157 (THST…RPLF), 158 to 262 (SPTT…NEHA), 263 to 374 (PIIH…TPVR), 376 to 471 (EKDV…TPEF), 472 to 577 (QEAL…SPLF), 578 to 680 (EKVA…SKSF), 726 to 830 (KSFP…NPVF), 831 to 935 (LQDS…SPAF), 936 to 1042 (IPSS…TPYF), 1043 to 1147 (PDFA…APLT), 1148 to 1253 (SEPI…RPQF), 1254 to 1358 (PEKV…SPIP), 1362 to 1459 (DEPF…GPEF), 1460 to 1565 (SQPH…SPYF), 1566 to 1768 (TNPL…PPVF), 1769 to 1882 (LFSQ…PPVF), 1883 to 1985 (TQAV…TQSF), 1982 to 2083 (TQSF…SPVF), 2084 to 2185 (VGLP…MPVF), 2186 to 2286 (DKPF…PPVF), 2287 to 2393 (DQPT…PPVF), 2394 to 2495 (NQLI…SPAF), 2496 to 2599 (SQST…APQF), 2600 to 2707 (MTVE…LPSF), 2708 to 2813 (TQSQ…KPVF), 2814 to 2923 (ETST…APVF), 2924 to 3028 (AHEV…SPVC), 3029 to 3130 (DQVA…PPVF), 3131 to 3235 (SSNH…PPVF), 3236 to 3340 (ERRD…PPRF), 3341 to 3445 (SQDV…SPVF), 3446 to 3550 (TPAN…KPTA), and 3551 to 3660 (IPLE…PEDF). An N-linked (GlcNAc...) asparagine glycan is attached at N48. An N-linked (GlcNAc...) asparagine glycan is attached at N341. 7 N-linked (GlcNAc...) asparagine glycosylation sites follow: N481, N562, N667, N799, N879, N898, and N1006. Residues N1367 and N1429 are each glycosylated (N-linked (GlcNAc...) asparagine). An N-linked (GlcNAc...) asparagine glycan is attached at N1751. N-linked (GlcNAc...) asparagine glycans are attached at residues N1944, N1993, and N1996. N2208, N2292, N2331, and N2467 each carry an N-linked (GlcNAc...) asparagine glycan. N2734 is a glycosylation site (N-linked (GlcNAc...) asparagine). Residue N3000 is glycosylated (N-linked (GlcNAc...) asparagine). An N-linked (GlcNAc...) asparagine glycan is attached at N3201. N3449, N3618, and N3741 each carry an N-linked (GlcNAc...) asparagine glycan. One can recognise an EGF-like 1 domain in the interval 3794–3832 (SNDPCVEKPCPEDMQCVGYEASRRPFLCQCPPGKLGECS). Cystine bridges form between C3798/C3809, C3803/C3821, and C3823/C3831. The Laminin G-like domain maps to 3834–4017 (HTSLSFAGNS…VGLTELKLGC (184 aa)). The N-linked (GlcNAc...) asparagine glycan is linked to N3926. Intrachain disulfides connect C3984–C4017, C4024–C4035, C4029–C4045, C4047–C4056, C4063–C4074, C4068–C4083, C4085–C4094, C4101–C4112, C4106–C4121, and C4123–C4132. EGF-like domains follow at residues 4020–4057 (YPDA…TNCE) and 4059–4095 (EITA…VTCE). The EGF-like 4; calcium-binding domain occupies 4097 to 4133 (DVDECEREECENGGSCVNLFGSFFCNCTPGYVGQYCG). The chain crosses the membrane as a helical span at residues 4154–4174 (LIGIAVVLFVIFTLIVLFIVF). Residues 4175–4555 (RKKVFRKNYS…FVETQQQTQV (381 aa)) are Cytoplasmic-facing. Disordered regions lie at residues 4300–4353 (IRKN…YHWD) and 4395–4474 (GGYD…LGGP). Over residues 4322-4343 (CFTNSNKGSNSEVQSLSSFQSD) the composition is skewed to polar residues. Omega-N-methylarginine is present on residues R4508 and R4518.

Restricted to the nervous system, mainly in brain. In brain, it is highly expressed in the olfactory bulb and retina. In the developing olfactory bulb, it localizes along the dendrites of these cells as well as in their axons to some extent. In retina, it cocentrates in the inner plexiform layer throughout development (at protein level).

It localises to the membrane. Its function is as follows. May play a role in the interactions between neurites derived from specific subsets of neurons during development. This Mus musculus (Mouse) protein is Protocadherin Fat 3 (Fat3).